The primary structure comprises 212 residues: MKLYTYYRSTSSYRVRIALALKGLDYQSLPVNLIRDGGEHRQPAYLALNPQGRVPALQVDEGELLIQSPAIIEYLEERYPQPALLSSDPLRRARERGVAALVGCDIHPLHNASVLNLLRQWGHDEEQVRQWIGHWVGQGLAAVEQLIGDQGWCFGDRPGLADVYLVPQLYAAERFGVALDAWPRIRRVADLAAAHPAFRQAHPANQPDTPAA.

In terms of domain architecture, GST N-terminal spans 1-83; it reads MKLYTYYRST…YLEERYPQPA (83 aa). Positions 88–211 constitute a GST C-terminal domain; the sequence is DPLRRARERG…HPANQPDTPA (124 aa).

This sequence belongs to the GST superfamily. Zeta family.

The catalysed reaction is 4-maleylacetoacetate = 4-fumarylacetoacetate. It participates in amino-acid degradation; L-phenylalanine degradation; acetoacetate and fumarate from L-phenylalanine: step 5/6. This chain is Maleylacetoacetate isomerase (maiA), found in Pseudomonas aeruginosa (strain ATCC 15692 / DSM 22644 / CIP 104116 / JCM 14847 / LMG 12228 / 1C / PRS 101 / PAO1).